Here is a 359-residue protein sequence, read N- to C-terminus: Fructose-bisphosphate aldolase (359 aa).

Ser50 is a D-glyceraldehyde 3-phosphate binding site. The active-site Proton donor is the Asp83. Residues His84, Asp105, Glu142, and His198 each coordinate Zn(2+). Residue Gly199 participates in dihydroxyacetone phosphate binding. His232 lines the Zn(2+) pocket. Dihydroxyacetone phosphate contacts are provided by residues 233–235 (GSS) and 275–278 (NIDT).

Belongs to the class II fructose-bisphosphate aldolase family. In terms of assembly, homodimer. Zn(2+) is required as a cofactor.

The enzyme catalyses beta-D-fructose 1,6-bisphosphate = D-glyceraldehyde 3-phosphate + dihydroxyacetone phosphate. The protein operates within carbohydrate biosynthesis; Calvin cycle. It functions in the pathway carbohydrate degradation; glycolysis; D-glyceraldehyde 3-phosphate and glycerone phosphate from D-glucose: step 4/4. Catalyzes the aldol condensation of dihydroxyacetone phosphate (DHAP or glycerone-phosphate) with glyceraldehyde 3-phosphate (G3P) to form fructose 1,6-bisphosphate (FBP) in gluconeogenesis and the reverse reaction in glycolysis. The protein is Fructose-bisphosphate aldolase (cbbA) of Sinorhizobium medicae (strain WSM419) (Ensifer medicae).